The chain runs to 295 residues: 4-diphosphocytidyl-2-C-methyl-D-erythritol kinase (295 aa).

The active site involves Lys-18. Pro-101–Ser-111 is an ATP binding site. Asp-143 is an active-site residue.

It belongs to the GHMP kinase family. IspE subfamily.

The enzyme catalyses 4-CDP-2-C-methyl-D-erythritol + ATP = 4-CDP-2-C-methyl-D-erythritol 2-phosphate + ADP + H(+). Its pathway is isoprenoid biosynthesis; isopentenyl diphosphate biosynthesis via DXP pathway; isopentenyl diphosphate from 1-deoxy-D-xylulose 5-phosphate: step 3/6. In terms of biological role, catalyzes the phosphorylation of the position 2 hydroxy group of 4-diphosphocytidyl-2C-methyl-D-erythritol. The protein is 4-diphosphocytidyl-2-C-methyl-D-erythritol kinase of Vibrio cholerae serotype O1 (strain ATCC 39315 / El Tor Inaba N16961).